A 144-amino-acid chain; its full sequence is Large ribosomal subunit protein uL15 (144 aa).

A disordered region spans residues 1–53 (MRLNTLSPAEGSKHASKRLGRGIGSGLGKTGGRGHKGQKSRSGGGVRRGFEGG). Positions 21-31 (RGIGSGLGKTG) are enriched in gly residues.

The protein belongs to the universal ribosomal protein uL15 family. In terms of assembly, part of the 50S ribosomal subunit.

Functionally, binds to the 23S rRNA. In Edwardsiella ictaluri (strain 93-146), this protein is Large ribosomal subunit protein uL15.